The sequence spans 331 residues: Porphobilinogen deaminase (331 aa).

Cys248 carries the S-(dipyrrolylmethanemethyl)cysteine modification. The tract at residues 307 to 331 is disordered; the sequence is QLLQAPKQTGEPHDPDRHDKGTGRP. Positions 316–331 are enriched in basic and acidic residues; it reads GEPHDPDRHDKGTGRP.

Belongs to the HMBS family. Monomer. It depends on dipyrromethane as a cofactor.

It catalyses the reaction 4 porphobilinogen + H2O = hydroxymethylbilane + 4 NH4(+). It participates in porphyrin-containing compound metabolism; protoporphyrin-IX biosynthesis; coproporphyrinogen-III from 5-aminolevulinate: step 2/4. Functionally, tetrapolymerization of the monopyrrole PBG into the hydroxymethylbilane pre-uroporphyrinogen in several discrete steps. The chain is Porphobilinogen deaminase from Acidothermus cellulolyticus (strain ATCC 43068 / DSM 8971 / 11B).